A 363-amino-acid chain; its full sequence is Flagellar P-ring protein (363 aa).

Positions 1–20 (MKKFTLLLLCFVLPMTSAYA) are cleaved as a signal peptide.

The protein belongs to the FlgI family. In terms of assembly, the basal body constitutes a major portion of the flagellar organelle and consists of four rings (L,P,S, and M) mounted on a central rod.

The protein resides in the periplasm. It localises to the bacterial flagellum basal body. Its function is as follows. Assembles around the rod to form the L-ring and probably protects the motor/basal body from shearing forces during rotation. The chain is Flagellar P-ring protein from Vibrio vulnificus (strain YJ016).